Reading from the N-terminus, the 806-residue chain is Acetyl-CoA decarbonylase/synthase complex subunit alpha 1 (806 aa).

[4Fe-4S] cluster contacts are provided by Cys73, Cys76, Cys77, Cys79, Cys84, and Cys94. His117 contributes to the CO binding site. His250, Cys278, and Cys323 together coordinate [Ni-4Fe-4S] cluster. 2 consecutive 4Fe-4S ferredoxin-type domains span residues 407 to 436 (DEQM…IPEA) and 445 to 475 (YSYL…LSVI). [4Fe-4S] cluster is bound by residues Cys417, Cys420, Cys423, Cys427, Cys455, Cys458, Cys461, and Cys465. [Ni-4Fe-4S] cluster is bound by residues Cys523, Cys552, and Cys587.

The protein belongs to the Ni-containing carbon monoxide dehydrogenase family. As to quaternary structure, heterotetramer of two alpha and two epsilon subunits. The ACDS complex is made up of alpha, epsilon, beta, gamma and delta subunits with a probable stoichiometry of (alpha(2)epsilon(2))(4)-beta(8)-(gamma(1)delta(1))(8). The cofactor is [4Fe-4S] cluster. [Ni-4Fe-4S] cluster is required as a cofactor.

It carries out the reaction CO + 2 oxidized [2Fe-2S]-[ferredoxin] + H2O = 2 reduced [2Fe-2S]-[ferredoxin] + CO2 + 2 H(+). The protein operates within one-carbon metabolism; methanogenesis from acetate. Part of the ACDS complex that catalyzes the reversible cleavage of acetyl-CoA, allowing growth on acetate as sole source of carbon and energy. The alpha-epsilon subcomponent functions as a carbon monoxide dehydrogenase. The chain is Acetyl-CoA decarbonylase/synthase complex subunit alpha 1 from Methanosarcina thermophila.